The following is an 83-amino-acid chain: Small ribosomal subunit protein uS17 (83 aa).

This sequence belongs to the universal ribosomal protein uS17 family. As to quaternary structure, part of the 30S ribosomal subunit.

One of the primary rRNA binding proteins, it binds specifically to the 5'-end of 16S ribosomal RNA. The sequence is that of Small ribosomal subunit protein uS17 from Pseudoalteromonas atlantica (strain T6c / ATCC BAA-1087).